The chain runs to 156 residues: Lipoprotein signal peptidase (156 aa).

The next 3 helical transmembrane spans lie at 5 to 25 (FKFIFYFWGAFVLVFALDQWV), 64 to 84 (YLHLALIVVLFIYLFWQKTLL), and 89 to 109 (IAFGMMLGAGVSNLLDRFIHG). Active-site residues include Asp-113 and Asp-130. The helical transmembrane segment at 122-142 (NFAIFNVADVMINISVALILI) threads the bilayer.

This sequence belongs to the peptidase A8 family.

It localises to the cell inner membrane. The enzyme catalyses Release of signal peptides from bacterial membrane prolipoproteins. Hydrolyzes -Xaa-Yaa-Zaa-|-(S,diacylglyceryl)Cys-, in which Xaa is hydrophobic (preferably Leu), and Yaa (Ala or Ser) and Zaa (Gly or Ala) have small, neutral side chains.. It participates in protein modification; lipoprotein biosynthesis (signal peptide cleavage). Its function is as follows. This protein specifically catalyzes the removal of signal peptides from prolipoproteins. In Campylobacter jejuni subsp. jejuni serotype O:23/36 (strain 81-176), this protein is Lipoprotein signal peptidase.